Consider the following 740-residue polypeptide: Elongation factor 2 (740 aa).

In terms of domain architecture, tr-type G spans 23-264; it reads AQIRNAGTLA…MIIEHIPPPN (242 aa). GTP is bound by residues 32–39, 98–102, and 152–155; these read AHVDHGKT, DTPGH, and NKID. The residue at position 605 (His605) is a Diphthamide.

Belongs to the TRAFAC class translation factor GTPase superfamily. Classic translation factor GTPase family. EF-G/EF-2 subfamily.

It localises to the cytoplasm. Functionally, catalyzes the GTP-dependent ribosomal translocation step during translation elongation. During this step, the ribosome changes from the pre-translocational (PRE) to the post-translocational (POST) state as the newly formed A-site-bound peptidyl-tRNA and P-site-bound deacylated tRNA move to the P and E sites, respectively. Catalyzes the coordinated movement of the two tRNA molecules, the mRNA and conformational changes in the ribosome. This is Elongation factor 2 from Pyrobaculum aerophilum (strain ATCC 51768 / DSM 7523 / JCM 9630 / CIP 104966 / NBRC 100827 / IM2).